We begin with the raw amino-acid sequence, 322 residues long: Malate dehydrogenase 1 (322 aa).

Residues 10–15 and Asp-34 each bind NAD(+); that span reads GSGQIG. Residues Arg-83 and Arg-89 each coordinate substrate. NAD(+) is bound by residues Asn-96 and 119-121; that span reads ITN. The substrate site is built by Asn-121 and Arg-152. Residue His-176 is the Proton acceptor of the active site.

The protein belongs to the LDH/MDH superfamily. MDH type 3 family.

It carries out the reaction (S)-malate + NAD(+) = oxaloacetate + NADH + H(+). In terms of biological role, catalyzes the reversible oxidation of malate to oxaloacetate. In Rhodopseudomonas palustris (strain BisB18), this protein is Malate dehydrogenase 1.